Consider the following 297-residue polypeptide: MSSVYSDKSSSTPAVTGGGFGGEIMLFGVRVKVDPMRKSVSLNDLSQYEHPNANNNNNGGDNNESSKVAQDEGYASADDAVQHQSNSGRERKRGVPWTEEEHKLFLLGLQKVGKGDWRGISRNFVKTRTPTQVASHAQKYFLRRSNLNRRRRRSSLFDITTDSVSVMPIEEVENKQEIPVVAPATLPTTKTNAFPVAPTVGPIIFPVQIDKSREYPTLLRHDHGNSSMLVGPVPMFSMPNPSTAIDLNANHNSTIEPSSLSLRLSLSLDQGQASSTRHSAYNVMSSFSNGESIIRVA.

Residues 44–96 are disordered; that stretch reads DLSQYEHPNANNNNNGGDNNESSKVAQDEGYASADDAVQHQSNSGRERKRGVP. Residues 52–63 show a composition bias toward low complexity; the sequence is NANNNNNGGDNN. An HTH myb-type domain is found at 89-145; sequence RERKRGVPWTEEEHKLFLLGLQKVGKGDWRGISRNFVKTRTPTQVASHAQKYFLRRS. Residues 117-141 constitute a DNA-binding region (H-T-H motif); that stretch reads WRGISRNFVKTRTPTQVASHAQKYF.

It is found in the nucleus. Its subcellular location is the cytoplasm. It localises to the cytosol. In terms of biological role, binds selectively to the DNA sequence 5'-[GA]GATAA-3' and may act as a transcription factor involved in the regulation of drought-responsive genes. Enhances stomatal closure in response to abscisic acid (ABA). Confers drought and salt tolerance. This chain is Transcription factor MYB1R1, found in Solanum tuberosum (Potato).